The following is a 359-amino-acid chain: Phospho-N-acetylmuramoyl-pentapeptide-transferase (359 aa).

A run of 10 helical transmembrane segments spans residues 3–23 (QILIAVAVAVTVSILLTPVLI), 55–75 (VAILAGIWAGYLGAHLAGLAF), 80–100 (IGASGLLVLGLATALGGVGFI), 117–137 (TAKTVGQITSAVLFGVLVLQF), 156–176 (IATVTLAPVLFVLFCVVIVSA), 187–207 (LDGLAAGTMAMVTAAYVLITF), 231–251 (LALIAAATAGACIGFLWWNAA), 255–275 (IFMGDTGSLALGGVIAGLSVT), 280–300 (ILAVVLGALFVAEITSVVLQI), and 334–354 (FWLLTAITCGLGVALFYGEWL).

It belongs to the glycosyltransferase 4 family. MraY subfamily. The cofactor is Mg(2+).

The protein localises to the cell membrane. It catalyses the reaction UDP-N-acetyl-alpha-D-muramoyl-L-alanyl-gamma-D-glutamyl-meso-2,6-diaminopimeloyl-D-alanyl-D-alanine + di-trans,octa-cis-undecaprenyl phosphate = di-trans,octa-cis-undecaprenyl diphospho-N-acetyl-alpha-D-muramoyl-L-alanyl-D-glutamyl-meso-2,6-diaminopimeloyl-D-alanyl-D-alanine + UMP. It functions in the pathway cell wall biogenesis; peptidoglycan biosynthesis. Functionally, catalyzes the initial step of the lipid cycle reactions in the biosynthesis of the cell wall peptidoglycan: transfers peptidoglycan precursor phospho-MurNAc-pentapeptide from UDP-MurNAc-pentapeptide onto the lipid carrier undecaprenyl phosphate, yielding undecaprenyl-pyrophosphoryl-MurNAc-pentapeptide, known as lipid I. This chain is Phospho-N-acetylmuramoyl-pentapeptide-transferase, found in Mycobacterium tuberculosis (strain ATCC 25177 / H37Ra).